Here is a 329-residue protein sequence, read N- to C-terminus: UDP-N-acetylenolpyruvoylglucosamine reductase (329 aa).

An FAD-binding PCMH-type domain is found at 28–192 (RVGGPADLLC…ARVEVRLHPG (165 aa)). The active site involves Arg172. Residue Ser221 is the Proton donor of the active site. Glu291 is an active-site residue. Residues 307–329 (DGHAAAGGGPGAASGGVRPPEAT) are disordered. The segment covering 311-320 (AAGGGPGAAS) has biased composition (gly residues).

It belongs to the MurB family. Requires FAD as cofactor.

It is found in the cytoplasm. It catalyses the reaction UDP-N-acetyl-alpha-D-muramate + NADP(+) = UDP-N-acetyl-3-O-(1-carboxyvinyl)-alpha-D-glucosamine + NADPH + H(+). It functions in the pathway cell wall biogenesis; peptidoglycan biosynthesis. Functionally, cell wall formation. This is UDP-N-acetylenolpyruvoylglucosamine reductase from Anaeromyxobacter dehalogenans (strain 2CP-1 / ATCC BAA-258).